We begin with the raw amino-acid sequence, 109 residues long: Cell division protein ZapA (109 aa).

The stretch at Pro-21–Gln-97 forms a coiled coil.

This sequence belongs to the ZapA family. Type 1 subfamily. As to quaternary structure, homodimer. Interacts with FtsZ.

It localises to the cytoplasm. Its function is as follows. Activator of cell division through the inhibition of FtsZ GTPase activity, therefore promoting FtsZ assembly into bundles of protofilaments necessary for the formation of the division Z ring. It is recruited early at mid-cell but it is not essential for cell division. This Enterobacter sp. (strain 638) protein is Cell division protein ZapA.